Consider the following 624-residue polypeptide: APC membrane recruitment protein 2 (624 aa).

Disordered stretches follow at residues 1 to 308 and 342 to 596; these read MDSH…PPSE and EDVG…IPVS. Basic and acidic residues predominate over residues 74–91; it reads SGKKEDAGGGEAQGKDAP. Positions 101–111 are enriched in low complexity; it reads SASSSVAKSHS. Basic and acidic residues-rich tracts occupy residues 120–132 and 247–258; these read GRPENGKAAENAE and RRLEELCGERPD. 2 stretches are compositionally biased toward low complexity: residues 272 to 282 and 295 to 307; these read ITGDIPITTIP and AAAPDPSSVDPPS. Positions 406–416 are enriched in gly residues; the sequence is TGGGGGGGGGT. The segment covering 450 to 464 has biased composition (basic and acidic residues); sequence NNKEEQKGREKEQHE. The span at 535–549 shows a compositional bias: polar residues; the sequence is PITTTCSLKTPSSTV.

This sequence belongs to the Amer family.

It is found in the cell membrane. Negative regulator of the canonical Wnt signaling pathway involved in neuroectodermal patterning. Acts by specifically binding phosphatidylinositol 4,5-bisphosphate (PtdIns(4,5)P2), translocating to the cell membrane and interacting with key regulators of the canonical Wnt signaling pathway, such as components of the beta-catenin destruction complex. This chain is APC membrane recruitment protein 2 (AMER2), found in Gallus gallus (Chicken).